Consider the following 210-residue polypeptide: Imidazoleglycerol-phosphate dehydratase (210 aa).

Belongs to the imidazoleglycerol-phosphate dehydratase family.

The protein localises to the cytoplasm. It catalyses the reaction D-erythro-1-(imidazol-4-yl)glycerol 3-phosphate = 3-(imidazol-4-yl)-2-oxopropyl phosphate + H2O. The protein operates within amino-acid biosynthesis; L-histidine biosynthesis; L-histidine from 5-phospho-alpha-D-ribose 1-diphosphate: step 6/9. In Mycobacterium bovis (strain ATCC BAA-935 / AF2122/97), this protein is Imidazoleglycerol-phosphate dehydratase.